Consider the following 162-residue polypeptide: Putative 4-hydroxy-4-methyl-2-oxoglutarate aldolase (162 aa).

Residues 75–78 and Arg-97 each bind substrate; that span reads GDML. Residue Asp-98 coordinates a divalent metal cation.

This sequence belongs to the class II aldolase/RraA-like family. In terms of assembly, homotrimer. The cofactor is a divalent metal cation.

It carries out the reaction 4-hydroxy-4-methyl-2-oxoglutarate = 2 pyruvate. It catalyses the reaction oxaloacetate + H(+) = pyruvate + CO2. Catalyzes the aldol cleavage of 4-hydroxy-4-methyl-2-oxoglutarate (HMG) into 2 molecules of pyruvate. Also contains a secondary oxaloacetate (OAA) decarboxylase activity due to the common pyruvate enolate transition state formed following C-C bond cleavage in the retro-aldol and decarboxylation reactions. The polypeptide is Putative 4-hydroxy-4-methyl-2-oxoglutarate aldolase (Ectopseudomonas mendocina (strain ymp) (Pseudomonas mendocina)).